Here is a 144-residue protein sequence, read N- to C-terminus: ATP synthase epsilon chain (144 aa).

The protein belongs to the ATPase epsilon chain family. As to quaternary structure, F-type ATPases have 2 components, CF(1) - the catalytic core - and CF(0) - the membrane proton channel. CF(1) has five subunits: alpha(3), beta(3), gamma(1), delta(1), epsilon(1). CF(0) has three main subunits: a, b and c.

The protein resides in the cell inner membrane. Produces ATP from ADP in the presence of a proton gradient across the membrane. This chain is ATP synthase epsilon chain, found in Hydrogenovibrio crunogenus (strain DSM 25203 / XCL-2) (Thiomicrospira crunogena).